Here is a 432-residue protein sequence, read N- to C-terminus: UDP-N-acetylglucosamine 1-carboxyvinyltransferase (432 aa).

22-23 (KN) is a phosphoenolpyruvate binding site. UDP-N-acetyl-alpha-D-glucosamine is bound at residue arginine 92. The active-site Proton donor is the cysteine 116. 2-(S-cysteinyl)pyruvic acid O-phosphothioketal is present on cysteine 116. UDP-N-acetyl-alpha-D-glucosamine-binding positions include 121–125 (RPVDQ), aspartate 307, and isoleucine 329.

The protein belongs to the EPSP synthase family. MurA subfamily.

The protein localises to the cytoplasm. It catalyses the reaction phosphoenolpyruvate + UDP-N-acetyl-alpha-D-glucosamine = UDP-N-acetyl-3-O-(1-carboxyvinyl)-alpha-D-glucosamine + phosphate. The protein operates within cell wall biogenesis; peptidoglycan biosynthesis. Its function is as follows. Cell wall formation. Adds enolpyruvyl to UDP-N-acetylglucosamine. In Psychrobacter sp. (strain PRwf-1), this protein is UDP-N-acetylglucosamine 1-carboxyvinyltransferase.